The chain runs to 144 residues: uncharacterized protein (144 aa).

Helical transmembrane passes span 10-30 (ILTR…GLGP) and 60-80 (YVFL…AIAV).

The protein resides in the membrane. This is an uncharacterized protein from Saccharomyces cerevisiae (strain ATCC 204508 / S288c) (Baker's yeast).